A 428-amino-acid polypeptide reads, in one-letter code: Enolase (428 aa).

Residue Q164 participates in (2R)-2-phosphoglycerate binding. Residue E206 is the Proton donor of the active site. Positions 243, 286, and 313 each coordinate Mg(2+). The (2R)-2-phosphoglycerate site is built by K338, R367, S368, and K389. K338 (proton acceptor) is an active-site residue.

It belongs to the enolase family. The cofactor is Mg(2+).

The protein localises to the cytoplasm. The protein resides in the secreted. It is found in the cell surface. It carries out the reaction (2R)-2-phosphoglycerate = phosphoenolpyruvate + H2O. The protein operates within carbohydrate degradation; glycolysis; pyruvate from D-glyceraldehyde 3-phosphate: step 4/5. Its function is as follows. Catalyzes the reversible conversion of 2-phosphoglycerate (2-PG) into phosphoenolpyruvate (PEP). It is essential for the degradation of carbohydrates via glycolysis. The protein is Enolase of Dehalococcoides mccartyi (strain ATCC BAA-2100 / JCM 16839 / KCTC 5957 / BAV1).